A 354-amino-acid polypeptide reads, in one-letter code: MKVLGIESSCDETGVAVYDTALSGVPALRAHAVYSQIALHAEYGGVVPELASRDHVRKLLPLIRQTLDEAGLRIDELDGVAYTAGPGLVGALLVGAGVARALAWALEVPAIGVHHMEGHLLAPLMEDDPPQPPFVALLVSGGHTQLVSVKALGAYEVLGETLDDAAGEAFDKTAKMMGLPYPGGPQLAALAETGTPGRYKFARPMTDRPGLDFSFSGLKTQVLLAWRGSDQSDTTRADIARGFEDAVVETLAIKCLRALDTADCNTLVVAGGVGANKRLRARLQEAAQRRGGRVCFPRPALCTDNGAMIAFAGALRLEAGEHADAAVQVTPRWDMASLPPLAAARESGIGNRES.

Residues His-115 and His-119 each coordinate Fe cation. Residues 138-142, Asp-171, Gly-184, and Asn-276 each bind substrate; that span reads LVSGG. Asp-304 contributes to the Fe cation binding site.

The protein belongs to the KAE1 / TsaD family. The cofactor is Fe(2+).

It is found in the cytoplasm. It carries out the reaction L-threonylcarbamoyladenylate + adenosine(37) in tRNA = N(6)-L-threonylcarbamoyladenosine(37) in tRNA + AMP + H(+). Its function is as follows. Required for the formation of a threonylcarbamoyl group on adenosine at position 37 (t(6)A37) in tRNAs that read codons beginning with adenine. Is involved in the transfer of the threonylcarbamoyl moiety of threonylcarbamoyl-AMP (TC-AMP) to the N6 group of A37, together with TsaE and TsaB. TsaD likely plays a direct catalytic role in this reaction. This chain is tRNA N6-adenosine threonylcarbamoyltransferase, found in Xanthomonas campestris pv. campestris (strain 8004).